Consider the following 300-residue polypeptide: C-4 methylsterol oxidase erg25 (300 aa).

The Fatty acid hydroxylase domain maps to 140–276; the sequence is TLFFFLEDTW…FRWWDAVLKT (137 aa). Residues 154 to 158 carry the Histidine box-1 motif; sequence HRLFH. A Histidine box-2 motif is present at residues 167–171; the sequence is HKVHH. The chain crosses the membrane as a helical span at residues 186–206; it reads PLEIILLGAGTVFVPLMWCYF. The short motif at 251-257 is the Histidine box-3 element; sequence HHDYHHM.

The protein belongs to the sterol desaturase family. Heterotetramer of erg25, erg26, erg27 and erg28. Erg28 acts as a scaffold to tether erg27 and other 4,4-demethylation-related enzymes, forming a demethylation enzyme complex, in the endoplasmic reticulum. Fe cation is required as a cofactor.

Its subcellular location is the endoplasmic reticulum membrane. It carries out the reaction 4,4-dimethyl-5alpha-cholesta-8,24-dien-3beta-ol + 6 Fe(II)-[cytochrome b5] + 3 O2 + 5 H(+) = 4beta-methylzymosterol-4alpha-carboxylate + 6 Fe(III)-[cytochrome b5] + 4 H2O. The enzyme catalyses 4alpha-methylzymosterol + 6 Fe(II)-[cytochrome b5] + 3 O2 + 5 H(+) = 4alpha-carboxyzymosterol + 6 Fe(III)-[cytochrome b5] + 4 H2O. It functions in the pathway steroid biosynthesis; zymosterol biosynthesis; zymosterol from lanosterol: step 3/6. Its pathway is steroid metabolism; ergosterol biosynthesis. Functionally, C-4 methylsterol oxidase; part of the third module of ergosterol biosynthesis pathway that includes by the late steps of the pathway. Erg25 is a catalytic component of the C-4 demethylation complex that catalyzes the three-step monooxygenation required for the demethylation of 4,4-dimethyl and 4alpha-methylsterols. The third module or late pathway involves the ergosterol synthesis itself through consecutive reactions that mainly occur in the endoplasmic reticulum (ER) membrane. Firstly, the squalene synthase erg9 catalyzes the condensation of 2 farnesyl pyrophosphate moieties to form squalene, which is the precursor of all steroids. Secondly, squalene is converted into lanosterol by the consecutive action of the squalene epoxidase erg1 and the lanosterol synthase erg7. The lanosterol 14-alpha-demethylase erg11/cyp1 catalyzes C14-demethylation of lanosterol to produce 4,4'-dimethyl cholesta-8,14,24-triene-3-beta-ol. In the next steps, a complex process involving various demethylation, reduction and desaturation reactions catalyzed by the C-14 reductase erg24 and the C-4 demethylation complex erg25-erg26-erg27 leads to the production of zymosterol. Erg28 likely functions in the C-4 demethylation complex reaction by tethering erg26 and Erg27 to the endoplasmic reticulum or to facilitate interaction between these proteins. Then, the sterol 24-C-methyltransferase erg6 catalyzes the methyl transfer from S-adenosyl-methionine to the C-24 of zymosterol to form fecosterol. The C-8 sterol isomerase erg2 catalyzes the reaction which results in unsaturation at C-7 in the B ring of sterols and thus converts fecosterol to episterol. The sterol-C5-desaturases erg31 and erg32 then catalyze the introduction of a C-5 double bond in the B ring to produce 5-dehydroepisterol. The C-22 sterol desaturase erg5 further converts 5-dehydroepisterol into ergosta-5,7,22,24(28)-tetraen-3beta-ol by forming the C-22(23) double bond in the sterol side chain. Finally, ergosta-5,7,22,24(28)-tetraen-3beta-ol is substrate of the C-24(28) sterol reductase erg4 to produce ergosterol. In the genus Schizosaccharomyces, a second route exists between lanosterol and fecosterol, via the methylation of lanosterol to eburicol by erg6, followed by C14-demethylation by erg11/cyp1 and C4-demethylation by the demethylation complex erg25-erg26-erg27. This is C-4 methylsterol oxidase erg25 from Schizosaccharomyces pombe (strain 972 / ATCC 24843) (Fission yeast).